The following is a 626-amino-acid chain: Polypeptide N-acetylgalactosaminyltransferase 5 (626 aa).

Residues 1 to 11 (MIIFKKKAILK) are Cytoplasmic-facing. The chain crosses the membrane as a helical; Signal-anchor for type II membrane protein span at residues 12-31 (VLLLVPVFWICSLIFFAATS). A glycan (N-linked (GlcNAc...) asparagine) is linked at Asn-32. At 32–626 (NDSSQIGSNN…AIEHGAKPPS (595 aa)) the chain is on the lumenal side. Cystine bridges form between Cys-165–Cys-399, Cys-390–Cys-466, Cys-502–Cys-521, Cys-544–Cys-557, and Cys-583–Cys-598. The interval 174–284 (LPRTSVIICF…EGWMEPLLDR (111 aa)) is catalytic subdomain A. 2 residues coordinate substrate: Asp-215 and Arg-245. Asp-268 is a binding site for Mn(2+). Residue Ser-269 participates in substrate binding. His-270 is a binding site for Mn(2+). Asn-338 carries N-linked (GlcNAc...) asparagine glycosylation. The segment at 345–407 (PVRSPTMAGG…PCSHVGHVFR (63 aa)) is catalytic subdomain B. Trp-376 serves as a coordination point for substrate. His-404 contributes to the Mn(2+) binding site. Substrate is bound by residues Arg-407 and Tyr-412. Residues 488 to 610 (AKGEVRNSAV…DDPYQHWKFK (123 aa)) enclose the Ricin B-type lectin domain.

Belongs to the glycosyltransferase 2 family. GalNAc-T subfamily. Mn(2+) is required as a cofactor.

It is found in the golgi apparatus membrane. The enzyme catalyses L-seryl-[protein] + UDP-N-acetyl-alpha-D-galactosamine = a 3-O-[N-acetyl-alpha-D-galactosaminyl]-L-seryl-[protein] + UDP + H(+). It carries out the reaction L-threonyl-[protein] + UDP-N-acetyl-alpha-D-galactosamine = a 3-O-[N-acetyl-alpha-D-galactosaminyl]-L-threonyl-[protein] + UDP + H(+). Its pathway is protein modification; protein glycosylation. In terms of biological role, catalyzes the initial reaction in O-linked oligosaccharide biosynthesis, the transfer of an N-acetyl-D-galactosamine residue to a serine or threonine residue on the protein receptor. This Caenorhabditis elegans protein is Polypeptide N-acetylgalactosaminyltransferase 5 (gly-5).